A 406-amino-acid chain; its full sequence is MKRAFILVLDSFGIGATADAKEFGDVGSDTLGHIADQCEKGLADNDKRQGALRLPNLSKLGLAMAHKESTGRFAPGLDADAEIIGAYGHAAELSSGKDTPSGHWEIAGVPVLFDWGYFTDKANSFPKELTDRILERAGLDGFLGNCHASGTQVLDDLGEEHMKTGQPIFYTSADSVFQIACHEETFGLDRLLELCQIAREELEDYNIGRVIARPFIGPGKGQFERTGNRRDLSVEPPSATVLQKLVEEKQGNVVSIGKIADIYANCGITKKVKATGIPALFEATLEQIKEAGDNTIVFTNFVDFDSAYGHRRDVAGYAAALEYFDGRINEVLELMGEDDVLILTADHGCDPTWPGTDHTREHIPVLVYGQKVPAGSLGRRETFADIGQTLASYFGTSPMDYGKNFL.

Mn(2+) is bound by residues Asp10, Asp305, His310, Asp346, His347, and His358.

This sequence belongs to the phosphopentomutase family. Requires Mn(2+) as cofactor.

The protein localises to the cytoplasm. It catalyses the reaction 2-deoxy-alpha-D-ribose 1-phosphate = 2-deoxy-D-ribose 5-phosphate. It carries out the reaction alpha-D-ribose 1-phosphate = D-ribose 5-phosphate. It functions in the pathway carbohydrate degradation; 2-deoxy-D-ribose 1-phosphate degradation; D-glyceraldehyde 3-phosphate and acetaldehyde from 2-deoxy-alpha-D-ribose 1-phosphate: step 1/2. Functionally, isomerase that catalyzes the conversion of deoxy-ribose 1-phosphate (dRib-1-P) and ribose 1-phosphate (Rib-1-P) to deoxy-ribose 5-phosphate (dRib-5-P) and ribose 5-phosphate (Rib-5-P), respectively. This Vibrio parahaemolyticus serotype O3:K6 (strain RIMD 2210633) protein is Phosphopentomutase.